A 346-amino-acid chain; its full sequence is Probable dual-specificity RNA methyltransferase RlmN (346 aa).

The Proton acceptor role is filled by Glu-91. In terms of domain architecture, Radical SAM core spans 97–325 (TEKRLTVCVS…VSVRYSKGLE (229 aa)). Cys-104 and Cys-330 form a disulfide bridge. [4Fe-4S] cluster is bound by residues Cys-111, Cys-115, and Cys-118. Residues 158-159 (GE), Ser-188, 211-213 (SLH), and Asn-287 contribute to the S-adenosyl-L-methionine site. The active-site S-methylcysteine intermediate is the Cys-330.

It belongs to the radical SAM superfamily. RlmN family. It depends on [4Fe-4S] cluster as a cofactor.

It localises to the cytoplasm. The enzyme catalyses adenosine(2503) in 23S rRNA + 2 reduced [2Fe-2S]-[ferredoxin] + 2 S-adenosyl-L-methionine = 2-methyladenosine(2503) in 23S rRNA + 5'-deoxyadenosine + L-methionine + 2 oxidized [2Fe-2S]-[ferredoxin] + S-adenosyl-L-homocysteine. It carries out the reaction adenosine(37) in tRNA + 2 reduced [2Fe-2S]-[ferredoxin] + 2 S-adenosyl-L-methionine = 2-methyladenosine(37) in tRNA + 5'-deoxyadenosine + L-methionine + 2 oxidized [2Fe-2S]-[ferredoxin] + S-adenosyl-L-homocysteine. Its function is as follows. Specifically methylates position 2 of adenine 2503 in 23S rRNA and position 2 of adenine 37 in tRNAs. This is Probable dual-specificity RNA methyltransferase RlmN from Picosynechococcus sp. (strain ATCC 27264 / PCC 7002 / PR-6) (Agmenellum quadruplicatum).